A 156-amino-acid chain; its full sequence is ATP synthase subunit b (156 aa).

The chain crosses the membrane as a helical span at residues 7-26 (ILGQAIAFVLFVWFCMKYVW).

The protein belongs to the ATPase B chain family. F-type ATPases have 2 components, F(1) - the catalytic core - and F(0) - the membrane proton channel. F(1) has five subunits: alpha(3), beta(3), gamma(1), delta(1), epsilon(1). F(0) has three main subunits: a(1), b(2) and c(10-14). The alpha and beta chains form an alternating ring which encloses part of the gamma chain. F(1) is attached to F(0) by a central stalk formed by the gamma and epsilon chains, while a peripheral stalk is formed by the delta and b chains.

It localises to the cell inner membrane. Functionally, f(1)F(0) ATP synthase produces ATP from ADP in the presence of a proton or sodium gradient. F-type ATPases consist of two structural domains, F(1) containing the extramembraneous catalytic core and F(0) containing the membrane proton channel, linked together by a central stalk and a peripheral stalk. During catalysis, ATP synthesis in the catalytic domain of F(1) is coupled via a rotary mechanism of the central stalk subunits to proton translocation. In terms of biological role, component of the F(0) channel, it forms part of the peripheral stalk, linking F(1) to F(0). This chain is ATP synthase subunit b, found in Pectobacterium atrosepticum (strain SCRI 1043 / ATCC BAA-672) (Erwinia carotovora subsp. atroseptica).